A 1270-amino-acid polypeptide reads, in one-letter code: MITNQTERLNFASTKNIPAYPDFLDVQVKSFQDFFQLETKSDERGNEGLYNTFMENFPITDTRNNFVLEFIDYFVDPPRYTIQECIERGLTYSVPLKARLKLYCTDPEHEDFETIVQDVYLGTIPYMTPSGTFVINGAERVVVSQLHRSPGVFFGQSFHANGTKLYSARVIPFKGSWIEFATDINSVMYAYIDRKKKLPVTTLFRAIGFQSDKDILEIFDLAEEIKVSKSGLKKYIGRKLAARVLNTWHEDFVDEDTGEVVSIERNEIILDRDTILDKDNVEEIVESNVKSILLHKEDNNVVDYSIIHNTLQKDPTNSEKEAVEHIYRQLRNAEPPDEETARGIIDKLFFSDQRYNLGEVGRYRINKKLGLDTPMEKQVLTKEDIITIVKYLIELINAKADIDDIDHLSNRRVRTVGEQLSQQFGVGLARMARTIRERMNVRDNEVFTPIDLINAKTLSSVINSFFGTNQLSQFMDQTNPLAEITHKRRLSALGPGGLSRERAGFEVRDVHYTHYGRLCPIETPEGPNIGLISSLGVYAKVNGMGFIETPYRKVTNGVVDLTSVPKYLSAEEEEGMLIAQANIQMDENGKITADNVIARQEGDFPVIDPTAVHYTDVAPNQIASISASLIPFLEHDDANRALMGSNMMRQAVPLIRPEAPIVGTGLERQVASDSRVLINAEGAGVVEYVDADMITIKYDRTDAERAVSFESDEKTYKLIKFRKTNQGTSINLKPIVRKGDKVIKGQVLCEGYATQNGELALGRNLKVAFMPWKGYNFEDAIVISEKVVRDDIFTSIHVDDYSLEVRDTKLGNEELTNDIPNVSEEATKDLDENGMIRIGAEVKPGDILIGKITPKGESDPTPEEKLLRAIFGDKAGDVKDASLKASPSLHGVVLDKKLFARAVKDKRKRTQDKDALSDLEMEFEVKFVELKDKLVDKLFTIVNGKTSQGVMNDLGEEVLPKGKKYTQKMLYAVEDFAHLTRGQWVADDETNKMVNDLIHNYKIKLNDLQGALRREKFTITVGDELPAGILKLAKVYIAKKRKLKVGDKMAGRHGNKGIVARIVRHEDMPFLEDGTPVDIVLNPLGVPSRMNIGQIYETVLGWAGQNLGRKYATPIFDGASLDQINAITDEAGVPRFGHTHLYDGGTGERFHQAATVGVIYMLKLGHMVDDKMHARSIGPYSLITQQPLGGKAQFGGQRFGEMEVWALEAYGASSTLREILTVKSDDVIGRAKTYEAIVKGETMPEPGLPESFNVLMHELKGLGLDIRLEE.

The protein belongs to the RNA polymerase beta chain family. The RNAP catalytic core consists of 2 alpha, 1 beta, 1 beta' and 1 omega subunit. When a sigma factor is associated with the core the holoenzyme is formed, which can initiate transcription.

It catalyses the reaction RNA(n) + a ribonucleoside 5'-triphosphate = RNA(n+1) + diphosphate. Functionally, DNA-dependent RNA polymerase catalyzes the transcription of DNA into RNA using the four ribonucleoside triphosphates as substrates. The protein is DNA-directed RNA polymerase subunit beta of Flavobacterium psychrophilum (strain ATCC 49511 / DSM 21280 / CIP 103535 / JIP02/86).